The following is a 356-amino-acid chain: Delta(7)-sterol 5(6)-desaturase (356 aa).

The next 3 helical transmembrane spans lie at 87–107 (LTLYLITWLFGVCVYYLFAGL), 134–154 (QANIAFPIMAIFTVPWFLAEV), and 171–191 (WYDYLQIPFFIAFTDLCIYWI). Residues 179–303 (FFIAFTDLCI…FTTLWDRLGG (125 aa)) form the Fatty acid hydroxylase domain. The short motif at 192–196 (HRGLH) is the Histidine box-1 element. The Histidine box-2 motif lies at 205-209 (HKPHH). Residues 235-255 (YIFPFLFPLSKIASVAFFVFV) form a helical membrane-spanning segment. A Histidine box-3 motif is present at residues 280 to 284 (HTMHH).

Belongs to the sterol desaturase family. Fe cation serves as cofactor.

Its subcellular location is the endoplasmic reticulum membrane. The catalysed reaction is a Delta(7)-sterol + 2 Fe(II)-[cytochrome b5] + O2 + 2 H(+) = a Delta(5),Delta(7)-sterol + 2 Fe(III)-[cytochrome b5] + 2 H2O. The protein operates within steroid metabolism; ergosterol biosynthesis; ergosterol from zymosterol: step 3/5. In terms of biological role, catalyzes the introduction of a C-5 double bond in the B ring of ergosterol. May contribute to the regulation of ergosterol biosynthesis. The protein is Delta(7)-sterol 5(6)-desaturase (ERG3) of Leptosphaeria maculans (Blackleg fungus).